The chain runs to 212 residues: MNQSLLAPYGNAIERVNAALTALREGKGVLVVDDEDRENEGDLIYSAETLTNEQMALLIRECSGIVCLCLTDERITQLELPPMVVDNNSQYGTAFTVSIEAKEGVTTGVSAADRVTTVKAAIADGAKPGDLARPGHVYPLRARPGGVLERRGHTEGTVDLMKLAGLKPFGVLCEVTLPDGTMARLPEIVEFGQQHNMPVLTIEDIVAYRNSQ.

Residues 37–38 (RE), D42, 150–154 (RRGHT), and E174 each bind D-ribulose 5-phosphate. Mg(2+) is bound at residue E38. Residue H153 participates in Mg(2+) binding.

Belongs to the DHBP synthase family. Homodimer. It depends on Mg(2+) as a cofactor. Requires Mn(2+) as cofactor.

The catalysed reaction is D-ribulose 5-phosphate = (2S)-2-hydroxy-3-oxobutyl phosphate + formate + H(+). It functions in the pathway cofactor biosynthesis; riboflavin biosynthesis; 2-hydroxy-3-oxobutyl phosphate from D-ribulose 5-phosphate: step 1/1. Catalyzes the conversion of D-ribulose 5-phosphate to formate and 3,4-dihydroxy-2-butanone 4-phosphate. The polypeptide is 3,4-dihydroxy-2-butanone 4-phosphate synthase (Shewanella piezotolerans (strain WP3 / JCM 13877)).